We begin with the raw amino-acid sequence, 409 residues long: Peptidase T (409 aa).

Histidine 78 contacts Zn(2+). Aspartate 80 is a catalytic residue. Zn(2+) is bound at residue aspartate 140. Glutamate 174 functions as the Proton acceptor in the catalytic mechanism. 3 residues coordinate Zn(2+): glutamate 175, aspartate 197, and histidine 379.

The protein belongs to the peptidase M20B family. It depends on Zn(2+) as a cofactor.

The protein resides in the cytoplasm. It catalyses the reaction Release of the N-terminal residue from a tripeptide.. In terms of biological role, cleaves the N-terminal amino acid of tripeptides. In Aliivibrio fischeri (strain ATCC 700601 / ES114) (Vibrio fischeri), this protein is Peptidase T.